The sequence spans 336 residues: MKLAVIGGDGIGPEVTAEALKVLDAVLPGVDKTEYDLGARRYHATGELLPDSVIDELRAHDAILLGAIGDPSVPSGVLERGLLLRLRFELDHHINLRPGRLYPGVSSPLAGNPDIDFVVVREGTEGPYTGTGGAIRVGTPNEVATEVSQNTAFGVRRVVVDAFERARRRRKHLTLVHKTNVLTFAGKLWSRIVAEVGRDYPDVEVAYQHIDAATIFMVTDPGRFDVIVTDNLFGDIITDLSAAVCGGIGLAASGNIDGTRTNPSMFEPVHGSAPDIAGQGVADPTAAIMSVALLLAHLGEDAAATRVDRAVERYLATRGNERPATTEVGERIAAAL.

Substrate is bound by residues Arg87, Arg97, Arg121, and Asp211. 3 residues coordinate Mg(2+): Asp211, Asp235, and Asp239. 271–283 (GSAPDIAGQGVAD) contributes to the NAD(+) binding site.

The protein belongs to the isocitrate and isopropylmalate dehydrogenases family. LeuB type 2 subfamily. As to quaternary structure, homodimer. Requires Mg(2+) as cofactor. The cofactor is Mn(2+).

The protein resides in the cytoplasm. It carries out the reaction (2R,3S)-3-isopropylmalate + NAD(+) = 4-methyl-2-oxopentanoate + CO2 + NADH. The protein operates within amino-acid biosynthesis; L-leucine biosynthesis; L-leucine from 3-methyl-2-oxobutanoate: step 3/4. Its function is as follows. Catalyzes the oxidation of 3-carboxy-2-hydroxy-4-methylpentanoate (3-isopropylmalate) to 3-carboxy-4-methyl-2-oxopentanoate. The product decarboxylates to 4-methyl-2 oxopentanoate. The protein is 3-isopropylmalate dehydrogenase of Mycobacterium avium (strain 104).